The chain runs to 883 residues: MNEQYSALRSNVSMLGKVLGETIKDALGEHILERVETIRKLSKSSRAGNDANRQELLTTLQNLSNDELLPVARAFSQFLNLANTAEQYHSISPKGEAASNPEVIARTLRKLKNQPELSEDTIKKAVESLSLELVLTAHPTEITRRTLIHKMVEVNACLKQLDNKDIADYEHNQLMRRLRQLIAQSWHTDEIRKLRPSPVDEAKWGFAVVENSLWQGVPNYLRELNEQLEENLGYKLPVEFVPVRFTSWMGGDRDGNPNVTADITRHVLLLSRWKATDLFLKDIQVLVSELSMVEATPELLALVGEEGAAEPYRYLMKNLRSRLMATQAWLEARLKGEELPKPEGLLTQNEELWEPLYACYQSLQACGMGIIANGDLLDTLRRVKCFGVPLVRIDIRQESTRHTEALGELTRYLGIGDYESWSEADKQAFLIRELNSKRPLLPRNWQPSAETREVLDTCQVIAEAPQGSIAAYVISMAKTPSDVLAVHLLLKEAGIGFAMPVAPLFETLDDLNNANDVMTQLLNIDWYRGLIQGKQMVMIGYSDSAKDAGVMAASWAQYQAQDALIKTCEKAGIELTLFHGRGGSIGRGGAPAHAALLSQPPGSLKGGLRVTEQGEMIRFKYGLPEITVSSLSLYTGAILEANLLPPPEPKESWRRIMDELSVISCDLYRGYVRENKDFVPYFRSATPEQELGKLPLGSRPAKRRPTGGVESLRAIPWIFAWTQNRLMLPAWLGAGTALQKVVEDGKQSELEAMCRDWPFFSTRLGMLEMVFAKADLWLAEYYDQRLVDKALWPLGKELRNLQEEDIKVVLAIANDSHLMADLPWIAESIQLRNIYTDPLNVLQAELLHRSRQAEKEGQEPDPRVEQALMVTIAGIAAGMRNTG.

Active-site residues include H138 and K546.

The protein belongs to the PEPCase type 1 family. Mg(2+) is required as a cofactor.

It catalyses the reaction oxaloacetate + phosphate = phosphoenolpyruvate + hydrogencarbonate. Forms oxaloacetate, a four-carbon dicarboxylic acid source for the tricarboxylic acid cycle. The chain is Phosphoenolpyruvate carboxylase from Escherichia coli (strain 55989 / EAEC).